Reading from the N-terminus, the 644-residue chain is uncharacterized protein (644 aa).

Disordered regions lie at residues 1–35 (MSSHDDDHTPLLISDPSVNKPFRSRTPSPEREYCS) and 48–106 (GNSH…SHHN). Phosphoserine is present on serine 28. Residues 58–70 (NGASSSNNNVAKS) show a composition bias toward low complexity. A compositionally biased stretch (polar residues) spans 83–106 (YDSTSNSNEPISFNEPDSSNSHHN). Helical transmembrane passes span 131 to 151 (ILPLNFINAFSWGMIEIPLLF), 190 to 210 (AAFGSLAAFLGLFSTAYYGTM), 218 to 238 (LVLFITVSFLLLGDLWLLYQS), 245 to 265 (YFVLFAAALKGLGGYISTVVA), 286 to 306 (LNFAAYHLGTALGPSLSGFIV), 314 to 334 (YVFYITSTFWIIYLLYVWLIL), 398 to 418 (VLLAAILISLTLLGAGSMGLL), 435 to 455 (LILSTDSFASSITLVALFPLL), 522 to 542 (VWNAQLGYAIALSAAVLLAVA), 546 to 566 (VALFTAVIIQAISNMVVPCVQ), 583 to 603 (AAFAVFEAVALIIRGPIYAFV), and 614 to 634 (NMIFFLSAVIYGCCFIIIFFM).

Its subcellular location is the membrane. This is an uncharacterized protein from Schizosaccharomyces pombe (strain 972 / ATCC 24843) (Fission yeast).